Here is a 487-residue protein sequence, read N- to C-terminus: N-succinylglutamate 5-semialdehyde dehydrogenase (487 aa).

Residue 221-226 coordinates NAD(+); it reads GSSRTG. Residues Glu244 and Cys278 contribute to the active site.

The protein belongs to the aldehyde dehydrogenase family. AstD subfamily.

It carries out the reaction N-succinyl-L-glutamate 5-semialdehyde + NAD(+) + H2O = N-succinyl-L-glutamate + NADH + 2 H(+). It functions in the pathway amino-acid degradation; L-arginine degradation via AST pathway; L-glutamate and succinate from L-arginine: step 4/5. In terms of biological role, catalyzes the NAD-dependent reduction of succinylglutamate semialdehyde into succinylglutamate. The sequence is that of N-succinylglutamate 5-semialdehyde dehydrogenase from Pseudomonas entomophila (strain L48).